Here is a 446-residue protein sequence, read N- to C-terminus: Nuclear envelope morphology protein 1 (446 aa).

The segment at 53–80 (VDQQYDHSSSHLKESDQNQERKNSVPKK) is disordered. Residues 56 to 75 (QYDHSSSHLKESDQNQERKN) are compositionally biased toward basic and acidic residues. The helical transmembrane segment at 87–103 (ILIEKIASILWALLLFL) threads the bilayer. Residues 132–168 (HTDKRNRGSNASENELPVSSSNINDSSEKTNPKNCNL) are disordered. The segment covering 139 to 156 (GSNASENELPVSSSNIND) has biased composition (polar residues). The FCP1 homology domain maps to 247-424 (NTQKKKKLVI…LNLLPFLEAM (178 aa)).

It belongs to the Dullard family. As to quaternary structure, component of the NEM1-SPO7 complex.

Its subcellular location is the endoplasmic reticulum membrane. The protein localises to the nucleus membrane. The enzyme catalyses O-phospho-L-seryl-[protein] + H2O = L-seryl-[protein] + phosphate. The catalysed reaction is O-phospho-L-threonyl-[protein] + H2O = L-threonyl-[protein] + phosphate. Its function is as follows. Catalytic component of the NEM1-SPO7 complex which acts as a phosphatase and dephosphorylates the phosphatidic acid phosphohydrolase PAH1. Essential for the formation of a spherical nucleus and meiotic division. The NEM1-SPOo7 protein phosphatase is required for efficient mitophagy under prolonged respiration, as well as for reticulophagy and pexophagy. The sequence is that of Nuclear envelope morphology protein 1 (NEM1) from Saccharomyces cerevisiae (strain ATCC 204508 / S288c) (Baker's yeast).